Here is a 185-residue protein sequence, read N- to C-terminus: CASP-like protein 5A1 (185 aa).

Topologically, residues 1-45 are cytoplasmic; it reads MNVSHPAVHPVGVPPALGGHAVPPRMRMRVRMEYLVFQGMPLPGT. Residues 46–66 form a helical membrane-spanning segment; it reads LGGLVLRLGQFCSALIAFSVM. Over 67–76 the chain is Extracellular; that stretch reads LSVRDFSVTA. A helical transmembrane segment spans residues 77–97; sequence FCYLVAATVLQCLWSLAMAVI. Residues 98 to 121 lie on the Cytoplasmic side of the membrane; sequence DVYALLVKRSLRNPLLVSIFVVGD. Residues 122–142 form a helical membrane-spanning segment; the sequence is GVTATLTFAAACASAGVIVLI. Topologically, residues 143-160 are extracellular; sequence GNDIAMCKDNPCANYEAA. Residues 161–181 form a helical membrane-spanning segment; the sequence is IIMAFLSWFMVSISFILTFWL. Residues 182–185 lie on the Cytoplasmic side of the membrane; that stretch reads LATL.

The protein belongs to the Casparian strip membrane proteins (CASP) family. As to quaternary structure, homodimer and heterodimers.

The protein resides in the cell membrane. The protein is CASP-like protein 5A1 of Picea sitchensis (Sitka spruce).